The chain runs to 578 residues: MAVTEAENPLLGEITCGTLLQKLQEIWDEVGESDEERDKLLLQIEEECLNVYKKKVELAAKSRAELLQTLSDATVELSNLTTALGEKSYIDIPDKTSGTIKEQLSAIAPALEQLWQQKEERVRAFSDVQSQIQKICEEIAGGLNNGPHVVDETDLSLKRLDDFQRKLQELQKEKSDRLQKVLEFVSTVHDLCAVLRLDFLSTVTEVHPSLDEANGVQTKSISNETLARLAKTVLTLKEDKMQRLKKLQELATQLTDLWNLMDTSDEERELFDHVTSNISASVHEVTASGALALDLIEQAEVEVDRLDQLKSSRMKEIAFKKQSELEEIYARAHIEIKPEVVRERIMSLIDAGNTEPTELLADMDSQIAKAKEEAFSRKEILDRVEKWMSACEEESWLEDYNRDQNRYSASRGAHLNLKRAEKARILVSKITAMVDTLIAKTRAWEEENSMSFEYDGVPLLAMLDEYTMLRQEREDEKRRLKEQKKQQEQPHTDQESAFGSKPSPARPVSAKKPVGTRVNGGGLNETPMRRLSMNSNQNGSKSKRDSLNKIASPSNIVANTKDDAASPVSRADPVMASP.

5 coiled-coil regions span residues 64 to 84 (AELLQTLSDATVELSNLTTAL), 151 to 184 (DETDLSLKRLDDFQRKLQELQKEKSDRLQKVLEF), 235 to 257 (TLKEDKMQRLKKLQELATQLTDL), 290 to 312 (ALALDLIEQAEVEVDRLDQLKSS), and 461 to 489 (AMLDEYTMLRQEREDEKRRLKEQKKQQEQ). Over residues 473-494 (REDEKRRLKEQKKQQEQPHTDQ) the composition is skewed to basic and acidic residues. Residues 473–578 (REDEKRRLKE…SRADPVMASP (106 aa)) are disordered. Phosphoserine is present on residues serine 503 and serine 532. The span at 549–558 (KIASPSNIVA) shows a compositional bias: polar residues. Residues serine 566, serine 569, and serine 577 each carry the phosphoserine modification.

The protein belongs to the MAP65/ASE1 family. As to quaternary structure, forms a dimer. Binds to microtubules (MT). Bundles polymerized MT via the formation of 25-nm crossbridges with centrally located endocytic MT.

The protein resides in the nucleus. It is found in the cytoplasm. It localises to the cytoskeleton. Its subcellular location is the spindle pole. The protein localises to the phragmoplast. Its function is as follows. Microtubule-associated protein that stabilize microtubules (MT). Involved in the regulation of MT organization and dynamics. Confers MT resistance to the drug propyzamide and cold conditions. The polypeptide is 65-kDa microtubule-associated protein 2 (MAP65-2) (Arabidopsis thaliana (Mouse-ear cress)).